The following is a 290-amino-acid chain: Fructose-1,6-bisphosphatase class 1 (290 aa).

Mg(2+)-binding residues include Glu78, Asp96, Leu98, and Asp99. Substrate-binding positions include 99-102 (DGSS), Tyr201, and Lys226. Glu232 contributes to the Mg(2+) binding site.

This sequence belongs to the FBPase class 1 family. As to quaternary structure, homotetramer. Mg(2+) serves as cofactor.

The protein localises to the cytoplasm. The catalysed reaction is beta-D-fructose 1,6-bisphosphate + H2O = beta-D-fructose 6-phosphate + phosphate. The protein operates within carbohydrate biosynthesis; gluconeogenesis. This is Fructose-1,6-bisphosphatase class 1 from Helicobacter pylori (strain Shi470).